The following is a 354-amino-acid chain: Annexin A13 (354 aa).

Annexin repeat units lie at residues 26–97 (NDPN…MLLT), 98–177 (DTDK…ALLQ), 203–275 (NLVE…LTLN), and 279–350 (NRPK…ALIG). Ca(2+)-binding residues include M39, G41, G43, T44, E46, E83, M111, G113, G115, E118, D163, D265, M292, G294, L295, G296, and E336.

This sequence belongs to the annexin family. Homodimer.

It localises to the tegument. It is found in the secreted. The protein resides in the extracellular exosome. The protein localises to the host cell. In terms of biological role, involved in reproduction of the worm. Involved in host-parasite interaction. Delivered into the host cell by means of parasite exosomes. Binds to acidic phospholipid membranes in a calcium-dependent manner in vitro. Causes aggregation of liposomes in the presence of calcium, but not in its absence. Likely to promote membrane fusion. May provide structural integrity within the tegument. The polypeptide is Annexin A13 (Schistosoma japonicum (Blood fluke)).